Here is a 250-residue protein sequence, read N- to C-terminus: Cell division protein ZapD (250 aa).

Belongs to the ZapD family. In terms of assembly, interacts with FtsZ.

It is found in the cytoplasm. In terms of biological role, cell division factor that enhances FtsZ-ring assembly. Directly interacts with FtsZ and promotes bundling of FtsZ protofilaments, with a reduction in FtsZ GTPase activity. The protein is Cell division protein ZapD of Pectobacterium carotovorum subsp. carotovorum (strain PC1).